Here is a 360-residue protein sequence, read N- to C-terminus: Peptide chain release factor 1 (360 aa).

Gln235 bears the N5-methylglutamine mark. The interval 281–310 (AERQRQDAAQAESRRLQVGSGDRSQRIRTY) is disordered.

The protein belongs to the prokaryotic/mitochondrial release factor family. In terms of processing, methylated by PrmC. Methylation increases the termination efficiency of RF1.

The protein resides in the cytoplasm. In terms of biological role, peptide chain release factor 1 directs the termination of translation in response to the peptide chain termination codons UAG and UAA. The chain is Peptide chain release factor 1 from Stenotrophomonas maltophilia (strain K279a).